Here is a 696-residue protein sequence, read N- to C-terminus: Interleukin-1 receptor accessory protein-like 1 (696 aa).

The first 18 residues, 1 to 18 (MKAPIPHLILLYATFTQS), serve as a signal peptide directing secretion. The Ig-like C2-type 1 domain maps to 19–134 (LKVVTKRGSA…YCMKVSISLT (116 aa)). Residues 19-357 (LKVVTKRGSA…LLHKRELMYT (339 aa)) are Extracellular-facing. 2 disulfides stabilise this stretch: Cys-31–Cys-126 and Cys-53–Cys-118. Asn-63, Asn-122, and Asn-138 each carry an N-linked (GlcNAc...) asparagine glycan. Disulfide bonds link Cys-143–Cys-185 and Cys-164–Cys-216. Ig-like C2-type domains lie at 143 to 232 (CYNS…TELT) and 242 to 350 (PKLL…VLLH). N-linked (GlcNAc...) asparagine glycosylation is found at Asn-213, Asn-264, and Asn-331. Cys-267 and Cys-334 are disulfide-bonded. A helical membrane pass occupies residues 358-378 (VELAGGLGAILLLLVCLVTIY). At 379–696 (KCYKIEIMLF…RETSISSVIW (318 aa)) the chain is on the cytoplasmic side. Residues 403–559 (KDYDAYLSYT…KFWKRLQYEM (157 aa)) form the TIR domain. The active site involves Glu-491. The tract at residues 549–644 (SKFWKRLQYE…TGTLPLTSIG (96 aa)) is interaction with NCS1. The segment at 659 to 680 (GQRPQTKSSREQNPDEAHTNSA) is disordered. Basic and acidic residues predominate over residues 666 to 676 (SSREQNPDEAH).

The protein belongs to the interleukin-1 receptor family. As to quaternary structure, homodimer. Interacts (calcium-independent) with NCS1. Interacts (via the first immunoglobilin domain) with PTPRD (via the second immunoglobilin domain); this interaction is PTPRD-splicing-dependent and induces pre- and post-synaptic differentiation of neurons and is required for IL1RAPL1-mediated synapse formation. Detected at low levels in heart, skeletal muscle, ovary, skin, amygdala, caudate nucleus, corpus callosum, hippocampus, substantia nigra and thalamus. Detected at very low levels in tonsil, prostate, testis, small intestine, placenta, colon and fetal liver.

The protein resides in the cell membrane. Its subcellular location is the cytoplasm. It is found in the cell projection. It localises to the axon. The protein localises to the dendrite. The catalysed reaction is NAD(+) + H2O = ADP-D-ribose + nicotinamide + H(+). Functionally, may regulate secretion and presynaptic differentiation through inhibition of the activity of N-type voltage-gated calcium channel. May activate the MAP kinase JNK. Plays a role in neurite outgrowth. During dendritic spine formation can bidirectionally induce pre- and post-synaptic differentiation of neurons by trans-synaptically binding to PTPRD. The protein is Interleukin-1 receptor accessory protein-like 1 (IL1RAPL1) of Homo sapiens (Human).